The sequence spans 393 residues: PxcA-like protein (393 aa).

The next 4 membrane-spanning stretches (helical) occupy residues 173 to 193 (FLIV…NLVF), 271 to 291 (IVNL…IIVF), 306 to 326 (FLAL…DMFV), and 354 to 374 (VYIF…LLIF).

Belongs to the CemA family. PxcL subfamily.

Its subcellular location is the cell inner membrane. Together with PxcA, contributes to transient H(+) uptake following dark to light transition. Required for H(+) influx to activate the Calvin-Benson-Bassham cycle. May also be involved in CO(2) transport. The chain is PxcA-like protein from Synechocystis sp. (strain ATCC 27184 / PCC 6803 / Kazusa).